A 217-amino-acid chain; its full sequence is ATP-dependent Clp protease proteolytic subunit (217 aa).

Catalysis depends on serine 121, which acts as the Nucleophile. Histidine 146 is a catalytic residue.

It belongs to the peptidase S14 family. Fourteen ClpP subunits assemble into 2 heptameric rings which stack back to back to give a disk-like structure with a central cavity, resembling the structure of eukaryotic proteasomes.

The protein localises to the cytoplasm. It carries out the reaction Hydrolysis of proteins to small peptides in the presence of ATP and magnesium. alpha-casein is the usual test substrate. In the absence of ATP, only oligopeptides shorter than five residues are hydrolyzed (such as succinyl-Leu-Tyr-|-NHMec, and Leu-Tyr-Leu-|-Tyr-Trp, in which cleavage of the -Tyr-|-Leu- and -Tyr-|-Trp bonds also occurs).. Its function is as follows. Cleaves peptides in various proteins in a process that requires ATP hydrolysis. Has a chymotrypsin-like activity. Plays a major role in the degradation of misfolded proteins. This chain is ATP-dependent Clp protease proteolytic subunit, found in Burkholderia mallei (strain NCTC 10247).